Reading from the N-terminus, the 117-residue chain is Large ribosomal subunit protein bL20 (117 aa).

It belongs to the bacterial ribosomal protein bL20 family.

In terms of biological role, binds directly to 23S ribosomal RNA and is necessary for the in vitro assembly process of the 50S ribosomal subunit. It is not involved in the protein synthesizing functions of that subunit. In Vibrio metschnikovii, this protein is Large ribosomal subunit protein bL20.